A 280-amino-acid polypeptide reads, in one-letter code: 3-methyl-2-oxobutanoate hydroxymethyltransferase (280 aa).

Residues Asp-49 and Asp-88 each contribute to the Mg(2+) site. 3-methyl-2-oxobutanoate-binding positions include 49 to 50, Asp-88, and Lys-118; that span reads DS. Glu-120 serves as a coordination point for Mg(2+). The active-site Proton acceptor is Glu-187.

Belongs to the PanB family. In terms of assembly, homodecamer; pentamer of dimers. Mg(2+) serves as cofactor.

It is found in the cytoplasm. The enzyme catalyses 3-methyl-2-oxobutanoate + (6R)-5,10-methylene-5,6,7,8-tetrahydrofolate + H2O = 2-dehydropantoate + (6S)-5,6,7,8-tetrahydrofolate. The protein operates within cofactor biosynthesis; (R)-pantothenate biosynthesis; (R)-pantoate from 3-methyl-2-oxobutanoate: step 1/2. Its function is as follows. Catalyzes the reversible reaction in which hydroxymethyl group from 5,10-methylenetetrahydrofolate is transferred onto alpha-ketoisovalerate to form ketopantoate. This Xanthobacter autotrophicus (strain ATCC BAA-1158 / Py2) protein is 3-methyl-2-oxobutanoate hydroxymethyltransferase.